Reading from the N-terminus, the 220-residue chain is N-(5'-phosphoribosyl)anthranilate isomerase (220 aa).

Belongs to the TrpF family.

The catalysed reaction is N-(5-phospho-beta-D-ribosyl)anthranilate = 1-(2-carboxyphenylamino)-1-deoxy-D-ribulose 5-phosphate. It functions in the pathway amino-acid biosynthesis; L-tryptophan biosynthesis; L-tryptophan from chorismate: step 3/5. The protein is N-(5'-phosphoribosyl)anthranilate isomerase of Bordetella petrii (strain ATCC BAA-461 / DSM 12804 / CCUG 43448).